A 278-amino-acid polypeptide reads, in one-letter code: MTVLHSVDFFPSGKAPVAIEPRLPQAAFPEHHHDFHEIVIVEHGTGIHVFNGQPYTISGGTVCFVRDHDRHLYEHTDNLCLTNVLWRSPDAFQFLAGLDQLLPQEQDGYYPSHWRVNQSVLQQVRQLVGLMERAGDSMDAPAVANREILFMQLLVLLRRSSLMEGATNNDAKLNQLMAWLEEHFAEEVCWEAVAEQFSLSLRTLHRQLKQHTGLTPQRYLNRLRLIKARHLLRHSDHSVTEIAYRCGFGDSNHFSTLFRREFNWSPRDIRQGRDAIIQ.

Residues 174-272 form the HTH araC/xylS-type domain; that stretch reads NQLMAWLEEH…NWSPRDIRQG (99 aa). 2 DNA-binding regions (H-T-H motif) span residues 191–212 and 239–262; these read EAVA…KQHT and VTEI…RREF.

In terms of assembly, binds DNA as a dimer.

The protein localises to the cytoplasm. In terms of biological role, activates expression of the rhaBAD and rhaT operons. This is HTH-type transcriptional activator RhaS from Salmonella schwarzengrund (strain CVM19633).